The following is a 251-amino-acid chain: uncharacterized protein (251 aa).

Positions 3 to 118 (KVVICDDERI…QLEHILDILV (116 aa)) constitute a Response regulatory domain. A 4-aspartylphosphate modification is found at Asp-55. The HTH araC/xylS-type domain occupies 152–249 (NQILSQIKQH…HMSPSDYNKL (98 aa)). 2 consecutive DNA-binding regions (H-T-H motif) follow at residues 169-190 (LDLI…KEHV) and 216-239 (HYEI…KKYL).

Phosphorylated by SE_0166.

It is found in the cytoplasm. Its function is as follows. Probable member of the two-component regulatory system SE_0166/SE_0165. This is an uncharacterized protein from Staphylococcus epidermidis (strain ATCC 12228 / FDA PCI 1200).